The chain runs to 89 residues: Large ribosomal subunit protein bL27 (89 aa).

Residues 1 to 22 are disordered; sequence MAHKKAGGSSRNGRDSESKRLG.

Belongs to the bacterial ribosomal protein bL27 family.

The protein is Large ribosomal subunit protein bL27 of Bartonella henselae (strain ATCC 49882 / DSM 28221 / CCUG 30454 / Houston 1) (Rochalimaea henselae).